Here is a 159-residue protein sequence, read N- to C-terminus: Transcription elongation factor GreA (159 aa).

Residues 46–73 (AEYHAAKEEQSFVEGRIKEIELKLSRMQ) are a coiled coil.

It belongs to the GreA/GreB family.

Its function is as follows. Necessary for efficient RNA polymerase transcription elongation past template-encoded arresting sites. The arresting sites in DNA have the property of trapping a certain fraction of elongating RNA polymerases that pass through, resulting in locked ternary complexes. Cleavage of the nascent transcript by cleavage factors such as GreA or GreB allows the resumption of elongation from the new 3'terminus. GreA releases sequences of 2 to 3 nucleotides. In Vesicomyosocius okutanii subsp. Calyptogena okutanii (strain HA), this protein is Transcription elongation factor GreA.